The sequence spans 754 residues: 5-methyltetrahydropteroyltriglutamate--homocysteine methyltransferase (754 aa).

5-methyltetrahydropteroyltri-L-glutamate is bound by residues 15–18 and Lys-114; that span reads RELK. Residues 430–432 and Glu-483 each bind L-homocysteine; that span reads IGS. Residues 430–432 and Glu-483 contribute to the L-methionine site; that span reads IGS. Residues 514-515 and Trp-560 each bind 5-methyltetrahydropteroyltri-L-glutamate; that span reads RC. Asp-598 serves as a coordination point for L-homocysteine. Asp-598 contacts L-methionine. A 5-methyltetrahydropteroyltri-L-glutamate-binding site is contributed by Glu-604. Zn(2+) contacts are provided by His-641, Cys-643, and Glu-665. His-694 serves as the catalytic Proton donor. Cys-726 contributes to the Zn(2+) binding site.

This sequence belongs to the vitamin-B12 independent methionine synthase family. Requires Zn(2+) as cofactor.

It carries out the reaction 5-methyltetrahydropteroyltri-L-glutamate + L-homocysteine = tetrahydropteroyltri-L-glutamate + L-methionine. It participates in amino-acid biosynthesis; L-methionine biosynthesis via de novo pathway; L-methionine from L-homocysteine (MetE route): step 1/1. In terms of biological role, catalyzes the transfer of a methyl group from 5-methyltetrahydrofolate to homocysteine resulting in methionine formation. This is 5-methyltetrahydropteroyltriglutamate--homocysteine methyltransferase from Campylobacter jejuni subsp. jejuni serotype O:2 (strain ATCC 700819 / NCTC 11168).